A 359-amino-acid chain; its full sequence is Holliday junction branch migration complex subunit RuvB (359 aa).

The tract at residues 1 to 187 (MSGLEHGDAS…FGFTAHLEFY (187 aa)) is large ATPase domain (RuvB-L). ATP is bound by residues leucine 26, arginine 27, glycine 68, lysine 71, threonine 72, threonine 73, 134-136 (EDY), arginine 177, tyrosine 187, and arginine 224. Threonine 72 is a binding site for Mg(2+). The small ATPAse domain (RuvB-S) stretch occupies residues 188-257 (ETHELEQVIE…SVRAALDLYD (70 aa)). Residues 260-359 (PLGLDRLDRA…VAGALFGDEL (100 aa)) are head domain (RuvB-H). Positions 315 and 320 each coordinate DNA.

It belongs to the RuvB family. As to quaternary structure, homohexamer. Forms an RuvA(8)-RuvB(12)-Holliday junction (HJ) complex. HJ DNA is sandwiched between 2 RuvA tetramers; dsDNA enters through RuvA and exits via RuvB. An RuvB hexamer assembles on each DNA strand where it exits the tetramer. Each RuvB hexamer is contacted by two RuvA subunits (via domain III) on 2 adjacent RuvB subunits; this complex drives branch migration. In the full resolvosome a probable DNA-RuvA(4)-RuvB(12)-RuvC(2) complex forms which resolves the HJ.

The protein localises to the cytoplasm. It carries out the reaction ATP + H2O = ADP + phosphate + H(+). In terms of biological role, the RuvA-RuvB-RuvC complex processes Holliday junction (HJ) DNA during genetic recombination and DNA repair, while the RuvA-RuvB complex plays an important role in the rescue of blocked DNA replication forks via replication fork reversal (RFR). RuvA specifically binds to HJ cruciform DNA, conferring on it an open structure. The RuvB hexamer acts as an ATP-dependent pump, pulling dsDNA into and through the RuvAB complex. RuvB forms 2 homohexamers on either side of HJ DNA bound by 1 or 2 RuvA tetramers; 4 subunits per hexamer contact DNA at a time. Coordinated motions by a converter formed by DNA-disengaged RuvB subunits stimulates ATP hydrolysis and nucleotide exchange. Immobilization of the converter enables RuvB to convert the ATP-contained energy into a lever motion, pulling 2 nucleotides of DNA out of the RuvA tetramer per ATP hydrolyzed, thus driving DNA branch migration. The RuvB motors rotate together with the DNA substrate, which together with the progressing nucleotide cycle form the mechanistic basis for DNA recombination by continuous HJ branch migration. Branch migration allows RuvC to scan DNA until it finds its consensus sequence, where it cleaves and resolves cruciform DNA. The sequence is that of Holliday junction branch migration complex subunit RuvB from Clavibacter michiganensis subsp. michiganensis (strain NCPPB 382).